Consider the following 102-residue polypeptide: ATP-dependent Clp protease adapter protein ClpS (102 aa).

The protein belongs to the ClpS family. Binds to the N-terminal domain of the chaperone ClpA.

Its function is as follows. Involved in the modulation of the specificity of the ClpAP-mediated ATP-dependent protein degradation. In Shewanella baltica (strain OS155 / ATCC BAA-1091), this protein is ATP-dependent Clp protease adapter protein ClpS.